We begin with the raw amino-acid sequence, 362 residues long: Bifunctional chorismate mutase/prephenate dehydratase (362 aa).

A Chorismate mutase domain is found at 3-91; it reads QTIDELLIPH…ECLAVERPLT (89 aa). The substrate site is built by Arg-13, Arg-30, Lys-41, and Glu-52. One can recognise a Prephenate dehydratase domain in the interval 92–269; it reads IAYLGPQGTF…NTTRFLVMGH (178 aa). Positions 281–356 constitute an ACT domain; the sequence is SLAVSAPNRA…RASFVKAIGS (76 aa).

It is found in the cytoplasm. The enzyme catalyses chorismate = prephenate. It carries out the reaction prephenate + H(+) = 3-phenylpyruvate + CO2 + H2O. The protein operates within amino-acid biosynthesis; L-phenylalanine biosynthesis; phenylpyruvate from prephenate: step 1/1. It functions in the pathway metabolic intermediate biosynthesis; prephenate biosynthesis; prephenate from chorismate: step 1/1. Functionally, catalyzes the Claisen rearrangement of chorismate to prephenate and the decarboxylation/dehydration of prephenate to phenylpyruvate. This chain is Bifunctional chorismate mutase/prephenate dehydratase (pheA), found in Neisseria gonorrhoeae (strain ATCC 700825 / FA 1090).